Here is a 91-residue protein sequence, read N- to C-terminus: uncharacterized protein (91 aa).

This is an uncharacterized protein from Archaeoglobus fulgidus (strain ATCC 49558 / DSM 4304 / JCM 9628 / NBRC 100126 / VC-16).